Consider the following 487-residue polypeptide: GTPase Der (487 aa).

The region spanning 2 to 166 (LKIAILGRPN…RIKLVANLPE (165 aa)) is the EngA-type G 1 domain. Residues 8–15 (GRPNVGKS), 55–59 (DTGGV), and 118–121 (NKAD) contribute to the GTP site. The disordered stretch occupies residues 165 to 194 (PEPREEEEEGLEELSVDEHEESEAALPSNT). Residues 168–187 (REEEEEGLEELSVDEHEESE) show a composition bias toward acidic residues. Residues 225-398 (LKIALIGRPN…AIDELHHVVS (174 aa)) form the EngA-type G 2 domain. Residues 231–238 (GRPNVGKS), 278–282 (DTAGL), and 343–346 (NKWD) each bind GTP. The KH-like domain maps to 399–483 (NKVPTPIVNK…PFDLEFKEKP (85 aa)).

It belongs to the TRAFAC class TrmE-Era-EngA-EngB-Septin-like GTPase superfamily. EngA (Der) GTPase family. As to quaternary structure, associates with the 50S ribosomal subunit.

Functionally, GTPase that plays an essential role in the late steps of ribosome biogenesis. This is GTPase Der from Chlamydia pneumoniae (Chlamydophila pneumoniae).